Here is a 412-residue protein sequence, read N- to C-terminus: Protein arginine N-methyltransferase 2 (412 aa).

Residues 48–65 show a composition bias toward basic and acidic residues; the sequence is EKNRNGDKEFRESTDDNK. Disordered stretches follow at residues 48–69 and 169–189; these read EKNRNGDKEFRESTDDNKTSNT and SVQTAVDGQKEESVGSDDDAT. Residues S181 and S184 each carry the phosphoserine modification. One can recognise an RMT2 domain in the interval 189-412; the sequence is TAANQQVYLK…YYYHPRITFA (224 aa). S-adenosyl-L-methionine-binding positions include Y196, M226, 250 to 255, 271 to 273, 298 to 299, and D319; these read FGMGII, EAH, and WQ.

The protein belongs to the class I-like SAM-binding methyltransferase superfamily. RMT2 methyltransferase family. In terms of assembly, monomer. Interacts with nucleoporins NUP49, NUP57 and NUP100.

It is found in the cytoplasm. The protein resides in the nucleus. Functionally, S-adenosyl-L-methionine-dependent protein-arginine N-methyltransferase that methylates the delta-nitrogen atom of arginine residues to form N5-methylarginine (type IV) in target proteins. Monomethylates ribosomal protein L12 (RPL12A/RPL12B) at 'Arg-67'. This chain is Protein arginine N-methyltransferase 2, found in Saccharomyces cerevisiae (strain ATCC 204508 / S288c) (Baker's yeast).